A 360-amino-acid polypeptide reads, in one-letter code: 3-isopropylmalate dehydrogenase (360 aa).

The segment covering R66–R75 has biased composition (basic residues). Residues R66 to V101 form a disordered region. Residues R133 and D223 each contribute to the substrate site. Mg(2+) contacts are provided by D223, D247, and D251.

Belongs to the isocitrate and isopropylmalate dehydrogenases family. LeuB type 1 subfamily. As to quaternary structure, homodimer. It depends on Mg(2+) as a cofactor. Requires Mn(2+) as cofactor.

It localises to the cytoplasm. The enzyme catalyses (2R,3S)-3-isopropylmalate + NAD(+) = 4-methyl-2-oxopentanoate + CO2 + NADH. Its pathway is amino-acid biosynthesis; L-leucine biosynthesis; L-leucine from 3-methyl-2-oxobutanoate: step 3/4. In terms of biological role, catalyzes the oxidation of 3-carboxy-2-hydroxy-4-methylpentanoate (3-isopropylmalate) to 3-carboxy-4-methyl-2-oxopentanoate. The product decarboxylates to 4-methyl-2 oxopentanoate. This chain is 3-isopropylmalate dehydrogenase (leuB), found in Azotobacter vinelandii.